The primary structure comprises 87 residues: Small ribosomal subunit protein bS20 (87 aa).

The segment at 1 to 22 (MANSAQARKRARQSLKARAHNA) is disordered. Residues 7 to 19 (ARKRARQSLKARA) are compositionally biased toward basic residues.

This sequence belongs to the bacterial ribosomal protein bS20 family.

In terms of biological role, binds directly to 16S ribosomal RNA. The polypeptide is Small ribosomal subunit protein bS20 (Laribacter hongkongensis (strain HLHK9)).